The following is a 134-amino-acid chain: Crustacean hyperglycemic hormones isoform B (134 aa).

A signal peptide spans 1 to 24 (MFACRTLCLVVVMVASLGTSGVGG). Position 61 is a pyrrolidone carboxylic acid (glutamine 61). Phenylalanine 63 bears the D-phenylalanine; in form CHH-B-II mark. Intrachain disulfides connect cysteine 67–cysteine 103, cysteine 83–cysteine 99, and cysteine 86–cysteine 112. Valine amide is present on valine 132.

This sequence belongs to the arthropod CHH/MIH/GIH/VIH hormone family. Post-translationally, stereoinversion of L-Phe (form CHH-B-I) to D-Phe (form CHH-B-II). In terms of tissue distribution, produced by the medulla terminalis X-organ in the eyestalks and transported to the sinus gland where they are stored and released. Present also in the ventral nervous system.

The protein localises to the secreted. In terms of biological role, hormone found in the sinus gland of isopods and decapods which controls the blood sugar level. Has a secretagogue action over the amylase released from the midgut gland. May act as a stress hormone and may be involved in the control of molting and reproduction. The polypeptide is Crustacean hyperglycemic hormones isoform B (Homarus americanus (American lobster)).